The sequence spans 627 residues: (-)-alpha-pinene synthase 1, chloroplastic (627 aa).

The N-terminal 36 residues, 1 to 36, are a transit peptide targeting the chloroplast; it reads MALVSIAPLASKSCLHKSLSSSAHELKTICRTIPTL. Mg(2+)-binding residues include aspartate 378, aspartate 382, and aspartate 530. Positions 378–382 match the DDXXD motif motif; it reads DDMYD.

The protein belongs to the terpene synthase family. Tpsd subfamily. Requires Mg(2+) as cofactor. Mn(2+) serves as cofactor.

It is found in the plastid. The protein localises to the chloroplast. It carries out the reaction (2E)-geranyl diphosphate = (1S,5S)-beta-pinene + diphosphate. The enzyme catalyses (2E)-geranyl diphosphate = (1S,5S)-alpha-pinene + diphosphate. It participates in terpene metabolism; oleoresin biosynthesis. Terpene synthase (TPS) involved in the biosynthesis of monoterpene natural products included in conifer oleoresin secretions and volatile emissions; these compounds contribute to biotic and abiotic stress defense against herbivores and pathogens. Catalyzes the conversion of (2E)-geranyl diphosphate (GPP) to (1S,5S)-beta-pinene. The polypeptide is (-)-alpha-pinene synthase 1, chloroplastic (Picea sitchensis (Sitka spruce)).